A 35-amino-acid chain; its full sequence is Photosystem II reaction center protein T (35 aa).

The helical transmembrane segment at 3–23 (ALVYTFLLVSTLGIIFFAIFF) threads the bilayer.

The protein belongs to the PsbT family. As to quaternary structure, PSII is composed of 1 copy each of membrane proteins PsbA, PsbB, PsbC, PsbD, PsbE, PsbF, PsbH, PsbI, PsbJ, PsbK, PsbL, PsbM, PsbT, PsbY, PsbZ, Psb30/Ycf12, at least 3 peripheral proteins of the oxygen-evolving complex and a large number of cofactors. It forms dimeric complexes.

Its subcellular location is the plastid. It localises to the chloroplast thylakoid membrane. In terms of biological role, found at the monomer-monomer interface of the photosystem II (PS II) dimer, plays a role in assembly and dimerization of PSII. PSII is a light-driven water plastoquinone oxidoreductase, using light energy to abstract electrons from H(2)O, generating a proton gradient subsequently used for ATP formation. In Saururus cernuus (Lizard's tail), this protein is Photosystem II reaction center protein T.